We begin with the raw amino-acid sequence, 586 residues long: Succinate dehydrogenase flavoprotein subunit (586 aa).

FAD is bound by residues 10–15 and 33–48; these read GGGLAG and SIVP…AQGG. Position 41 is a tele-8alpha-FAD histidine (histidine 41). Substrate is bound by residues histidine 236 and serine 250. The active-site Proton acceptor is arginine 285. Histidine 352 contacts substrate. Glutamate 376 is an FAD binding site. Arginine 386 contributes to the substrate binding site. 391-392 is an FAD binding site; the sequence is SL.

It belongs to the FAD-dependent oxidoreductase 2 family. FRD/SDH subfamily. In terms of assembly, in B.subtilis succinate dehydrogenase forms part of an enzyme complex containing three subunits: a flavoprotein, an iron-sulfur protein and cytochrome b-558. Interacts with FloT. It depends on FAD as a cofactor.

Its subcellular location is the cell membrane. The protein localises to the membrane raft. It carries out the reaction a quinone + succinate = fumarate + a quinol. It functions in the pathway carbohydrate metabolism; tricarboxylic acid cycle; fumarate from succinate (bacterial route): step 1/1. The protein is Succinate dehydrogenase flavoprotein subunit (sdhA) of Bacillus subtilis (strain 168).